The following is a 360-amino-acid chain: Archaemetzincin-2 (360 aa).

Position 254 (His254) interacts with Zn(2+). Residue Glu255 is the Proton acceptor of the active site. Residues His258, His264, Cys265, Cys270, Cys289, and Cys292 each coordinate Zn(2+).

The protein belongs to the peptidase M54 family. Zn(2+) is required as a cofactor. As to expression, down-regulated in testis from patients with maturation arrest (MA) or Sertoli cell-only syndrome (SCOS).

Functionally, probable zinc metalloprotease. The sequence is that of Archaemetzincin-2 (AMZ2) from Homo sapiens (Human).